We begin with the raw amino-acid sequence, 302 residues long: tRNA pseudouridine synthase B (302 aa).

Aspartate 48 acts as the Nucleophile in catalysis.

The protein belongs to the pseudouridine synthase TruB family. Type 1 subfamily.

The enzyme catalyses uridine(55) in tRNA = pseudouridine(55) in tRNA. Responsible for synthesis of pseudouridine from uracil-55 in the psi GC loop of transfer RNAs. This Xylella fastidiosa (strain Temecula1 / ATCC 700964) protein is tRNA pseudouridine synthase B.